Here is a 180-residue protein sequence, read N- to C-terminus: ATP-dependent protease subunit HslV (180 aa).

Thr7 is an active-site residue. 3 residues coordinate Na(+): Ala164, Cys167, and Thr170.

Belongs to the peptidase T1B family. HslV subfamily. In terms of assembly, a double ring-shaped homohexamer of HslV is capped on each side by a ring-shaped HslU homohexamer. The assembly of the HslU/HslV complex is dependent on binding of ATP.

Its subcellular location is the cytoplasm. It carries out the reaction ATP-dependent cleavage of peptide bonds with broad specificity.. With respect to regulation, allosterically activated by HslU binding. Protease subunit of a proteasome-like degradation complex believed to be a general protein degrading machinery. In Brevibacillus brevis (strain 47 / JCM 6285 / NBRC 100599), this protein is ATP-dependent protease subunit HslV.